Reading from the N-terminus, the 207-residue chain is Large ribosomal subunit protein uL4 (207 aa).

The interval 55-75 (SAVRGGGRKPWRQKGTGRARQ) is disordered. Positions 60-71 (GGRKPWRQKGTG) are enriched in basic residues.

The protein belongs to the universal ribosomal protein uL4 family. In terms of assembly, part of the 50S ribosomal subunit.

Functionally, one of the primary rRNA binding proteins, this protein initially binds near the 5'-end of the 23S rRNA. It is important during the early stages of 50S assembly. It makes multiple contacts with different domains of the 23S rRNA in the assembled 50S subunit and ribosome. Forms part of the polypeptide exit tunnel. The protein is Large ribosomal subunit protein uL4 of Staphylococcus epidermidis (strain ATCC 35984 / DSM 28319 / BCRC 17069 / CCUG 31568 / BM 3577 / RP62A).